The sequence spans 159 residues: MNISIISIGKLKEKYLKQGIAEYLKRLSAYAKVEVIELPDEKAPENLSEAEMLIVKEKEGIRILDKISDDTHVIALAIEGKQKSSEEFAISLDRLATYGKSKVAFVIGGSLGLSSEVMKRSNESLSFSKMTLPHQLMRLVLLEQVYRAFRINRGEPYHK.

S-adenosyl-L-methionine contacts are provided by residues Leu-76, Gly-108, and 127–132 (FSKMTL).

This sequence belongs to the RNA methyltransferase RlmH family. Homodimer.

It localises to the cytoplasm. The enzyme catalyses pseudouridine(1915) in 23S rRNA + S-adenosyl-L-methionine = N(3)-methylpseudouridine(1915) in 23S rRNA + S-adenosyl-L-homocysteine + H(+). Specifically methylates the pseudouridine at position 1915 (m3Psi1915) in 23S rRNA. This is Ribosomal RNA large subunit methyltransferase H from Bacillus cereus (strain ATCC 14579 / DSM 31 / CCUG 7414 / JCM 2152 / NBRC 15305 / NCIMB 9373 / NCTC 2599 / NRRL B-3711).